The following is a 94-amino-acid chain: U1-theraphotoxin-Sp1a (94 aa).

An N-terminal signal peptide occupies residues 1 to 22 (MIFLLPSIISVMLLAEPVLMLG). Positions 23 to 58 (DTEDADLMEMVQLSRPFFNPIIRAVELVELREERQR) are excised as a propeptide. Disulfide bonds link cysteine 60-cysteine 78, cysteine 67-cysteine 83, and cysteine 77-cysteine 88. Valine 92 bears the Valine amide mark.

It belongs to the neurotoxin 14 (magi-1) family. OAIP-1 subfamily. As to expression, expressed by the venom gland.

Its subcellular location is the secreted. Functionally, probable ion channel inhibitor. Shows insecticidal activity. Acts synergistically with the neonicotinoid insecticide imidacloprid. Is neither a repellent that repels insects nor an attractant that is preferentially consumed by insects. Is very stable. This is U1-theraphotoxin-Sp1a from Selenotypus plumipes (Australian featherleg tarantula).